The following is a 461-amino-acid chain: E3 ubiquitin-protein ligase parkin (461 aa).

The region spanning 30-90 is the Ubiquitin-like domain; it reads VNIYVKSNVG…DSTVIEVLDF (61 aa). S92 bears the Phosphoserine mark. The RING-type 0; atypical zinc finger occupies 145 to 227; sequence AHFFIYCANP…SQGENDTAVP (83 aa). Zn(2+) is bound by residues C151, C155, C167, and C170. Position 176 is a phosphothreonine (T176). 22 residues coordinate Zn(2+): C197, C202, C213, H216, C240, C243, C255, H259, C262, C265, C291, C295, C334, C339, C354, C356, C361, C364, H369, C373, C415, and C418. A TRIAD supradomain region spans residues 236-461; the sequence is KKIPCLACTD…RDCMASHWFG (226 aa). An RING-type 1 zinc finger spans residues 240–295; sequence CLACTDICDPVLVFSCDNRHVTCLECFKNYCGSRLKDRQFLSHPDFGYTLPCPAGC. 2 IBR-type zinc fingers span residues 315 to 373 and 411 to 452; these read EQYH…LGEC and LTKP…PWER. Residues 415 to 446 form an RING-type 2; atypical zinc finger; sequence CPKCRTSTERAGGCMHMICTRANCGFHWCWVC. C428 is a catalytic residue. The Zn(2+) site is built by C433, C438, C443, C446, C454, and H458.

It belongs to the RBR family. Parkin subfamily. In terms of assembly, forms an E3 ubiquitin ligase complex with E2 ubiquitin-conjugating enzymes. Post-translationally, auto-ubiquitinates in an E2-dependent manner leading to its own degradation. Phosphorylated. Activation requires phosphorylation at Ser-92 by Pink1 and binding to Pink1-phosphorylated polyubiquitin chains. Phosphorylation at Thr-176 by Pink1 is also important for mitochondrial localization.

Its subcellular location is the mitochondrion. The protein localises to the cytoplasm. It localises to the cytosol. It carries out the reaction [E2 ubiquitin-conjugating enzyme]-S-ubiquitinyl-L-cysteine + [acceptor protein]-L-lysine = [E2 ubiquitin-conjugating enzyme]-L-cysteine + [acceptor protein]-N(6)-ubiquitinyl-L-lysine.. It functions in the pathway protein modification; protein ubiquitination. In the autoinhibited state the side chain of Phe-460 inserts into a hydrophobic groove in RING-0, occluding the ubiquitin acceptor site Cys-428, whereas the REP repressor element binds RING-1 and blocks its E2-binding site. Activation of park requires 2 steps: (1) phosphorylation at Ser-92 by Pink1 and (2) binding to phosphorylated ubiquitin, leading to unlock repression of the catalytic Cys-428 by the RING-0 region via an allosteric mechanism and converting park to its fully-active form. According to another report, phosphorylation at Ser-92 by Pink1 is not essential for activation and only binding to phosphorylated ubiquitin is essential to unlock repression. Its function is as follows. E3 ubiquitin-protein ligase which accepts ubiquitin from E2 ubiquitin-conjugating enzymes in the form of a thioester and then directly transfers the ubiquitin to targeted substrates, such as Marf, Opa1, Sep1, Tom20 and porin. Mediates monoubiquitination as well as 'Lys-6', 'Lys-11', 'Lys-48'-linked and 'Lys-63'-linked polyubiquitination of substrates, depending on the context. Protects against mitochondrial dysfunction during cellular stress, by acting downstream of Pink1, to coordinate mitochondrial quality control mechanisms that remove and replace dysfunctional mitochondrial components. Depending on the severity of mitochondrial damage and/or dysfunction, activity ranges from preventing apoptosis and stimulating mitochondrial biogenesis to regulating mitochondrial dynamics and eliminating severely damaged mitochondria via mitophagy. Appears to be particularly important in maintaining the physiology and function of cells with high energy demands that are undergoing stress or altered metabolic environment, including spermatids, muscle cells and neurons such as the dopaminergic (DA) neurons. Activation and recruitment onto the outer membrane of damaged/dysfunctional mitochondria (OMM) requires Pink1-mediated phosphorylation of both park and ubiquitin. In depolarized mitochondria, mediates the decision between mitophagy or preventing apoptosis by inducing either the poly- or monoubiquitination of porin/VDAC; polyubiquitination of porin promotes mitophagy, while monoubiquitination of porin decreases mitochondrial calcium influx which ultimately inhibits apoptosis. When cellular stress results in irreversible mitochondrial damage, promotes the autophagic degradation of dysfunctional depolarized mitochondria (mitophagy) by promoting the ubiquitination of mitochondrial proteins. Preferentially assembles 'Lys-6'-, 'Lys-11'- and 'Lys-63'-linked polyubiquitin chains following mitochondrial damage, leading to mitophagy. In developing tissues, inhibits JNK-mediated apoptosis by negatively regulating bsk transcription. The Pink1-park pathway also promotes fission and/or inhibits fusion of damaged mitochondria by mediating the ubiquitination and subsequent degradation of proteins involved in mitochondrial fusion/fission such as Marf and Opa1. This prevents the refusion of unhealthy mitochondria with the healthy mitochondrial network and/or initiates mitochondrial fragmentation facilitating their later engulfment by autophagosomes. Regulates motility of damaged mitochondria by phosphorylating Miro which likely promotes its park-dependent degradation by the proteasome; in motor neurons, this inhibits mitochondrial intracellular anterograde transport along the axons which probably increases the chance of the mitochondria being eliminated in the soma. The Pink1-park pathway is also involved in mitochondrial regeneration processes such as promoting mitochondrial biogenesis, activating localized mitochondrial repair, promoting selective turnover of mitochondrial proteins and initiating the mitochondrial import of endogenous proteins. Involved in mitochondrial biogenesis via the ubiquitination of transcriptional repressor Paris which leads to its subsequent proteasomal degradation and allows activation of the transcription factor srl. Promotes localized mitochondrial repair by activating the translation of specific nuclear-encoded mitochondrial RNAs (nc-mtRNAs) on the mitochondrial surface, including several key electron transport chain component nc-mtRNAs. This Pediculus humanus subsp. corporis (Body louse) protein is E3 ubiquitin-protein ligase parkin.